Here is a 209-residue protein sequence, read N- to C-terminus: Orotate phosphoribosyltransferase (209 aa).

Residues R96, K100, H102, and 122-130 (EDLISTGGS) contribute to the 5-phospho-alpha-D-ribose 1-diphosphate site. Orotate is bound at residue S126.

Belongs to the purine/pyrimidine phosphoribosyltransferase family. PyrE subfamily. Homodimer. Mg(2+) is required as a cofactor.

The enzyme catalyses orotidine 5'-phosphate + diphosphate = orotate + 5-phospho-alpha-D-ribose 1-diphosphate. Its pathway is pyrimidine metabolism; UMP biosynthesis via de novo pathway; UMP from orotate: step 1/2. Catalyzes the transfer of a ribosyl phosphate group from 5-phosphoribose 1-diphosphate to orotate, leading to the formation of orotidine monophosphate (OMP). This Streptococcus pyogenes serotype M12 (strain MGAS2096) protein is Orotate phosphoribosyltransferase.